A 149-amino-acid chain; its full sequence is NADH-quinone oxidoreductase subunit I 1 (149 aa).

4Fe-4S ferredoxin-type domains follow at residues 51 to 82 (LKSF…VQGT) and 93 to 122 (THYV…YSTE). Positions 62, 65, 68, 72, 102, 105, 108, and 112 each coordinate [4Fe-4S] cluster.

This sequence belongs to the complex I 23 kDa subunit family. NDH-1 is composed of 14 different subunits. Subunits NuoA, H, J, K, L, M, N constitute the membrane sector of the complex. It depends on [4Fe-4S] cluster as a cofactor.

It is found in the cell inner membrane. It carries out the reaction a quinone + NADH + 5 H(+)(in) = a quinol + NAD(+) + 4 H(+)(out). NDH-1 shuttles electrons from NADH, via FMN and iron-sulfur (Fe-S) centers, to quinones in the respiratory chain. The immediate electron acceptor for the enzyme in this species is believed to be ubiquinone. Couples the redox reaction to proton translocation (for every two electrons transferred, four hydrogen ions are translocated across the cytoplasmic membrane), and thus conserves the redox energy in a proton gradient. The polypeptide is NADH-quinone oxidoreductase subunit I 1 (Syntrophobacter fumaroxidans (strain DSM 10017 / MPOB)).